The following is a 913-amino-acid chain: Polyribonucleotide nucleotidyltransferase (913 aa).

The tract at residues 407–427 is disordered; the sequence is YMHNYEMPPYSTGETGRVGSP. Residues Asp-521 and Asp-527 each contribute to the Mg(2+) site. The KH domain occupies 587–646; it reads PRIITTSVPVEKIGEVIGPKGKMINQIQEDTGAEIAIEDDGTVFISSEGGEAAEKAKAII. One can recognise an S1 motif domain in the interval 658-730; the sequence is GETYNGKVVK…DRGKISLAIP (73 aa). Positions 727-913 are disordered; it reads LAIPGFEDQE…VRRDFDPFED (187 aa). Composition is skewed to basic and acidic residues over residues 742–789, 797–865, and 872–898; these read SRGD…RRSD, DRPR…DRRG, and RGSDRNPRYATDDNYDDYRADREERTE.

Belongs to the polyribonucleotide nucleotidyltransferase family. Mg(2+) serves as cofactor.

It localises to the cytoplasm. It catalyses the reaction RNA(n+1) + phosphate = RNA(n) + a ribonucleoside 5'-diphosphate. Functionally, involved in mRNA degradation. Catalyzes the phosphorolysis of single-stranded polyribonucleotides processively in the 3'- to 5'-direction. This chain is Polyribonucleotide nucleotidyltransferase, found in Bifidobacterium longum (strain DJO10A).